The chain runs to 195 residues: Matrix protein (195 aa).

Belongs to the novirhabdovirus matrix protein family. As to quaternary structure, homomultimer.

It localises to the virion. Its subcellular location is the host cytoplasm. Its function is as follows. The M protein has a crucial role in virus assembly and interacts with the RNP complex as well as with the viral membrane. This Salmo (IHNV) protein is Matrix protein (M).